The sequence spans 158 residues: Ribosome maturation factor RimP (158 aa).

Belongs to the RimP family.

It localises to the cytoplasm. Functionally, required for maturation of 30S ribosomal subunits. The polypeptide is Ribosome maturation factor RimP (Streptococcus uberis (strain ATCC BAA-854 / 0140J)).